A 443-amino-acid chain; its full sequence is ATP-dependent protease ATPase subunit HslU (443 aa).

ATP is bound by residues Ile-18, 60-65 (GVGKTE), Asp-256, Glu-321, and Arg-393.

Belongs to the ClpX chaperone family. HslU subfamily. In terms of assembly, a double ring-shaped homohexamer of HslV is capped on each side by a ring-shaped HslU homohexamer. The assembly of the HslU/HslV complex is dependent on binding of ATP.

Its subcellular location is the cytoplasm. ATPase subunit of a proteasome-like degradation complex; this subunit has chaperone activity. The binding of ATP and its subsequent hydrolysis by HslU are essential for unfolding of protein substrates subsequently hydrolyzed by HslV. HslU recognizes the N-terminal part of its protein substrates and unfolds these before they are guided to HslV for hydrolysis. This chain is ATP-dependent protease ATPase subunit HslU, found in Citrobacter koseri (strain ATCC BAA-895 / CDC 4225-83 / SGSC4696).